We begin with the raw amino-acid sequence, 378 residues long: Spermidine/putrescine import ATP-binding protein PotA (378 aa).

In terms of domain architecture, ABC transporter spans 18–248 (VLLSGISKSF…PKNLFVAGFI (231 aa)). ATP is bound at residue 50–57 (GPSGCGKT).

The protein belongs to the ABC transporter superfamily. Spermidine/putrescine importer (TC 3.A.1.11.1) family. In terms of assembly, the complex is composed of two ATP-binding proteins (PotA), two transmembrane proteins (PotB and PotC) and a solute-binding protein (PotD).

It is found in the cell inner membrane. The enzyme catalyses ATP + H2O + polyamine-[polyamine-binding protein]Side 1 = ADP + phosphate + polyamineSide 2 + [polyamine-binding protein]Side 1.. Functionally, part of the ABC transporter complex PotABCD involved in spermidine/putrescine import. Responsible for energy coupling to the transport system. This Salmonella typhi protein is Spermidine/putrescine import ATP-binding protein PotA.